Reading from the N-terminus, the 454-residue chain is CBL-interacting protein kinase 33 (454 aa).

In terms of domain architecture, Protein kinase spans 13–268 (YELGRTIGEG…IPEILEDEWF (256 aa)). Residues 19-27 (IGEGTFAKV) and Lys42 each bind ATP. The active-site Proton acceptor is the Asp136. Residues 154–183 (DFGLSALSQQIKDDGLLHTTCGTPNYVAPE) are activation loop. The NAF domain occupies 305-329 (EEPEALNAFELISMSAGLNLGNLFD). The interval 335–364 (KRETRFTSKCPPKEIVRKIEEAAKPLGFDV) is PPI.

This sequence belongs to the protein kinase superfamily. CAMK Ser/Thr protein kinase family. SNF1 subfamily. The cofactor is Mn(2+).

It carries out the reaction L-seryl-[protein] + ATP = O-phospho-L-seryl-[protein] + ADP + H(+). It catalyses the reaction L-threonyl-[protein] + ATP = O-phospho-L-threonyl-[protein] + ADP + H(+). CIPK serine-threonine protein kinases interact with CBL proteins. Binding of a CBL protein to the regulatory NAF domain of CIPK protein lead to the activation of the kinase in a calcium-dependent manner. The sequence is that of CBL-interacting protein kinase 33 (CIPK33) from Oryza sativa subsp. japonica (Rice).